A 354-amino-acid chain; its full sequence is Uroporphyrinogen decarboxylase (354 aa).

Substrate is bound by residues 27–31 (RQAGR), aspartate 77, tyrosine 154, threonine 209, and histidine 327.

The protein belongs to the uroporphyrinogen decarboxylase family. Homodimer.

It localises to the cytoplasm. It carries out the reaction uroporphyrinogen III + 4 H(+) = coproporphyrinogen III + 4 CO2. The protein operates within porphyrin-containing compound metabolism; protoporphyrin-IX biosynthesis; coproporphyrinogen-III from 5-aminolevulinate: step 4/4. In terms of biological role, catalyzes the decarboxylation of four acetate groups of uroporphyrinogen-III to yield coproporphyrinogen-III. The protein is Uroporphyrinogen decarboxylase of Histophilus somni (strain 129Pt) (Haemophilus somnus).